The sequence spans 320 residues: Chitinase 3 (320 aa).

A signal peptide spans 1–18 (MRALALAVVAMAVVAVRG). One can recognise a Chitin-binding type-1 domain in the interval 19-59 (EQCGSQAGGALCPNCLCCSQYGWCGSTSDYCGAGCQSQCSG). Disulfide bonds link Cys21/Cys36, Cys30/Cys42, Cys33/Cys61, Cys35/Cys49, Cys53/Cys57, Cys97/Cys159, Cys172/Cys180, and Cys279/Cys311. Residue Glu141 is the Proton donor of the active site.

It belongs to the glycosyl hydrolase 19 family. Chitinase class I subfamily. In terms of tissue distribution, expressed at low levels in roots, leaves, sheaths and meristems.

The enzyme catalyses Random endo-hydrolysis of N-acetyl-beta-D-glucosaminide (1-&gt;4)-beta-linkages in chitin and chitodextrins.. Its function is as follows. Hydrolyzes chitin and plays a role in defense against fungal pathogens containing chitin. Inhibits the growth of T.reesei fungus on plate assay. In Oryza sativa subsp. japonica (Rice), this protein is Chitinase 3 (Cht3).